The sequence spans 642 residues: 3D-(3,5/4)-trihydroxycyclohexane-1,2-dione hydrolase (642 aa).

Position 71 (glutamate 71) interacts with thiamine diphosphate. The segment at 446–526 (SLPGDVQRIW…INILVFDNSG (81 aa)) is thiamine pyrophosphate binding. Residues aspartate 497 and asparagine 524 each coordinate Mg(2+).

The protein belongs to the TPP enzyme family. It depends on Mg(2+) as a cofactor. Thiamine diphosphate serves as cofactor.

It catalyses the reaction 3D-3,5/4-trihydroxycyclohexane-1,2-dione + H2O = 5-deoxy-D-glucuronate + H(+). The protein operates within polyol metabolism; myo-inositol degradation into acetyl-CoA; acetyl-CoA from myo-inositol: step 3/7. In terms of biological role, involved in the cleavage of the C1-C2 bond of 3D-(3,5/4)-trihydroxycyclohexane-1,2-dione (THcHDO) to yield 5-deoxy-glucuronate (5DG). The chain is 3D-(3,5/4)-trihydroxycyclohexane-1,2-dione hydrolase from Lacticaseibacillus casei (Lactobacillus casei).